We begin with the raw amino-acid sequence, 125 residues long: Protein ApaG (125 aa).

Residues 1–125 (MFTSSKVAIQ…FRLAIPTLIN (125 aa)) form the ApaG domain.

The sequence is that of Protein ApaG from Proteus mirabilis (strain HI4320).